A 216-amino-acid chain; its full sequence is Phosphoenolpyruvate guanylyltransferase (216 aa).

Phosphoenolpyruvate-binding residues include threonine 150, glycine 165, and serine 168.

Belongs to the CofC family.

The enzyme catalyses phosphoenolpyruvate + GTP + H(+) = enolpyruvoyl-2-diphospho-5'-guanosine + diphosphate. It participates in cofactor biosynthesis; coenzyme F420 biosynthesis. Functionally, guanylyltransferase that catalyzes the activation of phosphoenolpyruvate (PEP) as enolpyruvoyl-2-diphospho-5'-guanosine, via the condensation of PEP with GTP. It is involved in the biosynthesis of coenzyme F420, a hydride carrier cofactor. The chain is Phosphoenolpyruvate guanylyltransferase from Mycobacterium leprae (strain Br4923).